A 229-amino-acid chain; its full sequence is Synaptogyrin-3 (229 aa).

N-acetylmethionine is present on methionine 1. Residues 20–172 form the MARVEL domain; the sequence is FARRPQTLLR…LTVKALQRFR (153 aa). A run of 4 helical transmembrane segments spans residues 30–50, 70–90, 105–125, and 148–168; these read VASWVFSIAVFGPIVNEGYVN, FGVALGLGAFLACSCFLLLDV, VLLDLGFSGLWSFLWFVGFCF, and AVITFSFFSILSWVALTVKAL.

It belongs to the synaptogyrin family. As to quaternary structure, interacts (via N-terminus) with SLC6A3 (via N-terminus). May interact with VMAT2.

It is found in the cytoplasmic vesicle. The protein resides in the secretory vesicle. It localises to the synaptic vesicle membrane. Its subcellular location is the synapse. Functionally, may play a role in regulated exocytosis. May indirectly regulate the activity of the plasma membrane dopamine transporter SLC6A3 and thereby regulate dopamine transport back from the synaptic cleft into the presynaptic terminal. This chain is Synaptogyrin-3, found in Bos taurus (Bovine).